We begin with the raw amino-acid sequence, 466 residues long: Transcription factor SOX-10 (466 aa).

Residues 1 to 67 are disordered; the sequence is MAEEQDLSEV…QQDGEADDDK (67 aa). The span at 23 to 32 shows a compositional bias: low complexity; sequence LSPGSAPSLG. S24 bears the Phosphoserine mark. The tract at residues 62–102 is dimerization (DIM); sequence EADDDKFPVCIREAVSQVLSGYDWTLVPMPVRVNGASKSKP. Residues 104–172 constitute a DNA-binding region (HMG box); the sequence is VKRPMNAFMV…QHKKDHPDYK (69 aa). Positions 134 to 145 match the Nuclear export signal motif; the sequence is LSKTLGKLWRLL. Basic and acidic residues-rich tracts occupy residues 160–173 and 254–271; these read LRMQHKKDHPDYKY and ADPKRDGRSMGEGGKPHI. 4 disordered regions span residues 160–199, 212–274, 354–375, and 433–466; these read LRMQHKKDHPDYKYQPRRRKNGKAAQGEAECPGGEAEQGG, LDHR…IDFG, AQVKTETAGPQGPPHYTDQPST, and RPLYTAISDPSPSGPQSHSPTHWEQPVYTTLSRP. A transactivation domain (TAM) region spans residues 228 to 310; the sequence is PEHPSGQSHG…LPPNGHPGHV (83 aa). A transactivation domain (TAC) region spans residues 353–466; sequence KAQVKTETAG…QPVYTTLSRP (114 aa). Residues 440 to 466 are compositionally biased toward polar residues; sequence SDPSPSGPQSHSPTHWEQPVYTTLSRP.

In terms of assembly, monomer. Interacts with ARMCX3 at the mitochondrial outer membrane surface. Interacts with PAX3. Expressed in fetal brain and in adult brain, heart, small intestine and colon.

The protein resides in the cytoplasm. It localises to the nucleus. The protein localises to the mitochondrion outer membrane. In terms of biological role, transcription factor that plays a central role in developing and mature glia. Specifically activates expression of myelin genes, during oligodendrocyte (OL) maturation, such as DUSP15 and MYRF, thereby playing a central role in oligodendrocyte maturation and CNS myelination. Once induced, MYRF cooperates with SOX10 to implement the myelination program. Transcriptional activator of MITF, acting synergistically with PAX3. Transcriptional activator of MBP, via binding to the gene promoter. The protein is Transcription factor SOX-10 (SOX10) of Homo sapiens (Human).